Reading from the N-terminus, the 139-residue chain is Peptide methionine sulfoxide reductase MsrB (139 aa).

The 123-residue stretch at 8–130 folds into the MsrB domain; sequence EREWQRELSP…NSASLQLKTD (123 aa). Cysteine 47, cysteine 50, cysteine 96, and cysteine 99 together coordinate Zn(2+). The Nucleophile role is filled by cysteine 119.

It belongs to the MsrB Met sulfoxide reductase family. Zn(2+) is required as a cofactor.

The catalysed reaction is L-methionyl-[protein] + [thioredoxin]-disulfide + H2O = L-methionyl-(R)-S-oxide-[protein] + [thioredoxin]-dithiol. This is Peptide methionine sulfoxide reductase MsrB from Acinetobacter baylyi (strain ATCC 33305 / BD413 / ADP1).